The following is a 347-amino-acid chain: Holliday junction branch migration complex subunit RuvB (347 aa).

The segment at 1–183 is large ATPase domain (RuvB-L); the sequence is MTPPSRIVTP…FGIPIRLNFY (183 aa). Residues Leu-22, Arg-23, Gly-64, Lys-67, Thr-68, Thr-69, 130 to 132, Arg-173, Tyr-183, and Arg-220 contribute to the ATP site; that span reads EDF. A Mg(2+)-binding site is contributed by Thr-68. A small ATPAse domain (RuvB-S) region spans residues 184–254; that stretch reads TVEELEGIVS…IADHALSALE (71 aa). The head domain (RuvB-H) stretch occupies residues 257–347; it reads AAGLDAMDRR…QFGLFGGDEE (91 aa). DNA-binding residues include Arg-293, Arg-312, and Arg-317.

The protein belongs to the RuvB family. Homohexamer. Forms an RuvA(8)-RuvB(12)-Holliday junction (HJ) complex. HJ DNA is sandwiched between 2 RuvA tetramers; dsDNA enters through RuvA and exits via RuvB. An RuvB hexamer assembles on each DNA strand where it exits the tetramer. Each RuvB hexamer is contacted by two RuvA subunits (via domain III) on 2 adjacent RuvB subunits; this complex drives branch migration. In the full resolvosome a probable DNA-RuvA(4)-RuvB(12)-RuvC(2) complex forms which resolves the HJ.

The protein resides in the cytoplasm. The enzyme catalyses ATP + H2O = ADP + phosphate + H(+). The RuvA-RuvB-RuvC complex processes Holliday junction (HJ) DNA during genetic recombination and DNA repair, while the RuvA-RuvB complex plays an important role in the rescue of blocked DNA replication forks via replication fork reversal (RFR). RuvA specifically binds to HJ cruciform DNA, conferring on it an open structure. The RuvB hexamer acts as an ATP-dependent pump, pulling dsDNA into and through the RuvAB complex. RuvB forms 2 homohexamers on either side of HJ DNA bound by 1 or 2 RuvA tetramers; 4 subunits per hexamer contact DNA at a time. Coordinated motions by a converter formed by DNA-disengaged RuvB subunits stimulates ATP hydrolysis and nucleotide exchange. Immobilization of the converter enables RuvB to convert the ATP-contained energy into a lever motion, pulling 2 nucleotides of DNA out of the RuvA tetramer per ATP hydrolyzed, thus driving DNA branch migration. The RuvB motors rotate together with the DNA substrate, which together with the progressing nucleotide cycle form the mechanistic basis for DNA recombination by continuous HJ branch migration. Branch migration allows RuvC to scan DNA until it finds its consensus sequence, where it cleaves and resolves cruciform DNA. The protein is Holliday junction branch migration complex subunit RuvB of Rhodopseudomonas palustris (strain BisA53).